We begin with the raw amino-acid sequence, 70 residues long: Turripeptide Ici9.2 (70 aa).

Residues 1–20 (MKVYCLLLVLLVGLVSQAQG) form the signal peptide. Residues 21 to 70 (QLDKKCQTMCTMEYLPVCGSDGTTYPNKCTLTSTACVNQMDITVLHNGEC) form the Kazal-like domain. Intrachain disulfides connect C26–C56, C30–C49, and C38–C70.

Belongs to the conopeptide P-like superfamily. As to expression, expressed by the venom duct.

The protein resides in the secreted. In terms of biological role, acts as a neurotoxin by inhibiting an ion channel. May also act as a serine protease inhibitor, since it possess the kazal serine protease inhibitor signature. This Iotyrris cingulifera (Sea snail) protein is Turripeptide Ici9.2.